The chain runs to 749 residues: Homeobox-leucine zipper protein ROC7 (749 aa).

The disordered stretch occupies residues 26-98; the sequence is LDQHQQHQHQ…KKRYHRHTQH (73 aa). The span at 46–57 shows a compositional bias: basic and acidic residues; the sequence is SDGRAPRDELEM. The span at 68–79 shows a compositional bias: gly residues; the sequence is SGGGGGGGGSGG. Basic residues predominate over residues 86–97; sequence RPRKKRYHRHTQ. The homeobox DNA-binding region spans 88–147; it reads RKKRYHRHTQHQIQELEAFFKECPHPDDKQRKELSRELGLEPLQVKFWFQNKRTQMKTQH. Residues 137–218 adopt a coiled-coil conformation; sequence QNKRTQMKTQ…DRISAIAAKY (82 aa). The START domain maps to 256–494; it reads ADFDKPLVIE…LERQCERLAS (239 aa).

It belongs to the HD-ZIP homeobox family. Class IV subfamily.

It localises to the nucleus. Its function is as follows. Probable transcription factor. In Oryza sativa subsp. japonica (Rice), this protein is Homeobox-leucine zipper protein ROC7 (ROC7).